The primary structure comprises 347 residues: GMP reductase (347 aa).

108–131 (DDFTKTRQILAMSTALRFICVDVA) serves as a coordination point for NADP(+). K(+) is bound by residues G181 and G183. Residue C186 is the Thioimidate intermediate of the active site. 216 to 239 (IVGDGGCTCPGDVAKAFGGGADFV) lines the NADP(+) pocket.

It belongs to the IMPDH/GMPR family. GuaC type 1 subfamily. In terms of assembly, homotetramer.

It carries out the reaction IMP + NH4(+) + NADP(+) = GMP + NADPH + 2 H(+). Functionally, catalyzes the irreversible NADPH-dependent deamination of GMP to IMP. It functions in the conversion of nucleobase, nucleoside and nucleotide derivatives of G to A nucleotides, and in maintaining the intracellular balance of A and G nucleotides. This is GMP reductase from Aeromonas salmonicida (strain A449).